The sequence spans 299 residues: Pectin lyase (299 aa).

The N-terminal stretch at 1–18 (MKFSTFVSLGLTAITALA) is a signal peptide. Composition is skewed to low complexity over residues 82–91 (RSAATSPSSD) and 232–246 (SASA…TTRT). 2 disordered regions span residues 82–105 (RSAA…PSPS) and 227–246 (SRGR…TTRT).

This sequence belongs to the polysaccharide lyase 1 family.

The protein resides in the secreted. It carries out the reaction Eliminative cleavage of (1-&gt;4)-alpha-D-galacturonan methyl ester to give oligosaccharides with 4-deoxy-6-O-methyl-alpha-D-galact-4-enuronosyl groups at their non-reducing ends.. This Peyronellaea pinodes (Pea foot rot fungus) protein is Pectin lyase (PELA).